A 348-amino-acid chain; its full sequence is Methylthioribose-1-phosphate isomerase (348 aa).

Substrate is bound by residues 54–56 (RGA), arginine 96, and glutamine 199. The Proton donor role is filled by aspartate 240. 250–251 (NK) lines the substrate pocket.

The protein belongs to the eIF-2B alpha/beta/delta subunits family. MtnA subfamily.

It carries out the reaction 5-(methylsulfanyl)-alpha-D-ribose 1-phosphate = 5-(methylsulfanyl)-D-ribulose 1-phosphate. The protein operates within amino-acid biosynthesis; L-methionine biosynthesis via salvage pathway; L-methionine from S-methyl-5-thio-alpha-D-ribose 1-phosphate: step 1/6. Catalyzes the interconversion of methylthioribose-1-phosphate (MTR-1-P) into methylthioribulose-1-phosphate (MTRu-1-P). The protein is Methylthioribose-1-phosphate isomerase of Thioalkalivibrio sulfidiphilus (strain HL-EbGR7).